Reading from the N-terminus, the 169-residue chain is Nucleoside diphosphate kinase 3 (169 aa).

ADP contacts are provided by K29, R105, T111, R122, V129, and N132. The active-site Pros-phosphohistidine intermediate is H135.

It belongs to the NDK family. In terms of assembly, homohexamer. Interacts (via its N-terminal region) with KAT5; this interaction enables recruitment of NME3 at DNA damage sites where it plays a role in the repair of DNA. Found in association with several ciliary nephronophthisis proteins, including NEK8, CEP164, ANKS6. It depends on Mg(2+) as a cofactor.

Its subcellular location is the mitochondrion outer membrane. The protein localises to the cytoplasm. The protein resides in the cytoskeleton. It is found in the cilium basal body. It carries out the reaction a 2'-deoxyribonucleoside 5'-diphosphate + ATP = a 2'-deoxyribonucleoside 5'-triphosphate + ADP. The enzyme catalyses a ribonucleoside 5'-diphosphate + ATP = a ribonucleoside 5'-triphosphate + ADP. Catalyzes the phosphorylation of ribonucleosides and deoxyribonucleoside diphosphates, other than ATP, into the corresponding triphosphates with ATP as the major phosphate donor. The ATP gamma phosphate is transferred to the nucleoside diphosphate beta phosphate via a ping-pong mechanism, using a phosphorylated active-site intermediate. Through the catalyzed exchange of gamma-phosphate between di- and triphosphonucleosides participates in regulation of intracellular nucleotide homeostasis. Inhibits granulocyte differentiation. May be required for ciliary function during renal development. In terms of biological role, independently of its kinase activity, facilitates mitochondrial tethering prior to membrane fusion through its direct membrane-binding and hexamerization. Implicated in repair of both single- and double-stranded breaks in DNA through its association with the ribonucleotide reductase complex (RNR complex) via its interaction with the histone acetyltransferase KAT5, this interaction enables recruitment of NME3 at DNA damage sites where it plays a role in the repair of DNA, independently of its kinase activity. This is Nucleoside diphosphate kinase 3 (Nme3) from Mus musculus (Mouse).